The following is a 74-amino-acid chain: ATP synthase subunit c (74 aa).

2 consecutive transmembrane segments (helical) span residues 9 to 29 (IAIA…ASIF) and 51 to 71 (LIGA…AILL).

Belongs to the ATPase C chain family. F-type ATPases have 2 components, F(1) - the catalytic core - and F(0) - the membrane proton channel. F(1) has five subunits: alpha(3), beta(3), gamma(1), delta(1), epsilon(1). F(0) has three main subunits: a(1), b(2) and c(10-14). The alpha and beta chains form an alternating ring which encloses part of the gamma chain. F(1) is attached to F(0) by a central stalk formed by the gamma and epsilon chains, while a peripheral stalk is formed by the delta and b chains.

Its subcellular location is the cell inner membrane. Functionally, f(1)F(0) ATP synthase produces ATP from ADP in the presence of a proton or sodium gradient. F-type ATPases consist of two structural domains, F(1) containing the extramembraneous catalytic core and F(0) containing the membrane proton channel, linked together by a central stalk and a peripheral stalk. During catalysis, ATP synthesis in the catalytic domain of F(1) is coupled via a rotary mechanism of the central stalk subunits to proton translocation. Its function is as follows. Key component of the F(0) channel; it plays a direct role in translocation across the membrane. A homomeric c-ring of between 10-14 subunits forms the central stalk rotor element with the F(1) delta and epsilon subunits. In Orientia tsutsugamushi (strain Ikeda) (Rickettsia tsutsugamushi), this protein is ATP synthase subunit c.